Here is a 147-residue protein sequence, read N- to C-terminus: Arginine repressor (147 aa).

Belongs to the ArgR family.

It is found in the cytoplasm. It functions in the pathway amino-acid biosynthesis; L-arginine biosynthesis [regulation]. Functionally, regulates arginine biosynthesis genes. This is Arginine repressor from Chlamydia caviae (strain ATCC VR-813 / DSM 19441 / 03DC25 / GPIC) (Chlamydophila caviae).